A 143-amino-acid chain; its full sequence is Large ribosomal subunit protein uL13 (143 aa).

The protein belongs to the universal ribosomal protein uL13 family. Part of the 50S ribosomal subunit.

Its function is as follows. This protein is one of the early assembly proteins of the 50S ribosomal subunit, although it is not seen to bind rRNA by itself. It is important during the early stages of 50S assembly. In Thermoanaerobacter pseudethanolicus (strain ATCC 33223 / 39E) (Clostridium thermohydrosulfuricum), this protein is Large ribosomal subunit protein uL13.